Reading from the N-terminus, the 29-residue chain is Mycofactocin precursor peptide (29 aa).

The protein belongs to the mycofactocin precursor peptide family. Post-translationally, the post-translational modifications that lead to mycofactocin involve oxidative decarboxylation of the C-terminal tyrosine residue catalyzed by MftC, introduction of a tyramine-valine cross-link, removal of the modified C-terminal dipeptide by MftE. The released dipeptide then undergoes oxidative deamination by MftD, glycosylation by MftF and methylation by an unknown enzyme.

Functionally, precursor peptide that leads to mycofactocin (MFT) after extensive post-translational modifications by enzymes encoded by adjacent genes. Mycofactocin acts as a redox cofactor of nicotinamide-dependent oxidoreductases encoded in the same locus. This Mycobacterium tuberculosis (strain ATCC 25618 / H37Rv) protein is Mycofactocin precursor peptide.